A 456-amino-acid polypeptide reads, in one-letter code: Bifunctional protein GlmU (456 aa).

The tract at residues 1–229 (MYKSAVILAA…PDEIKGVNSR (229 aa)) is pyrophosphorylase. Residues 8 to 11 (LAAG), Lys-22, Gln-73, and 78 to 79 (GT) contribute to the UDP-N-acetyl-alpha-D-glucosamine site. Position 103 (Asp-103) interacts with Mg(2+). Positions 140, 155, 170, and 227 each coordinate UDP-N-acetyl-alpha-D-glucosamine. Asn-227 lines the Mg(2+) pocket. A linker region spans residues 230 to 250 (GQLAEAEEILRLRINERHMEN). The segment at 251–456 (GVTLIDPKNT…GWVAKKGLKK (206 aa)) is N-acetyltransferase. 2 residues coordinate UDP-N-acetyl-alpha-D-glucosamine: Arg-332 and Lys-350. Residue His-362 is the Proton acceptor of the active site. Residues Tyr-365 and Asn-376 each coordinate UDP-N-acetyl-alpha-D-glucosamine. Acetyl-CoA is bound by residues 385–386 (NY), Ala-422, and Arg-439.

In the N-terminal section; belongs to the N-acetylglucosamine-1-phosphate uridyltransferase family. This sequence in the C-terminal section; belongs to the transferase hexapeptide repeat family. As to quaternary structure, homotrimer. The cofactor is Mg(2+).

It is found in the cytoplasm. It catalyses the reaction alpha-D-glucosamine 1-phosphate + acetyl-CoA = N-acetyl-alpha-D-glucosamine 1-phosphate + CoA + H(+). It carries out the reaction N-acetyl-alpha-D-glucosamine 1-phosphate + UTP + H(+) = UDP-N-acetyl-alpha-D-glucosamine + diphosphate. Its pathway is nucleotide-sugar biosynthesis; UDP-N-acetyl-alpha-D-glucosamine biosynthesis; N-acetyl-alpha-D-glucosamine 1-phosphate from alpha-D-glucosamine 6-phosphate (route II): step 2/2. The protein operates within nucleotide-sugar biosynthesis; UDP-N-acetyl-alpha-D-glucosamine biosynthesis; UDP-N-acetyl-alpha-D-glucosamine from N-acetyl-alpha-D-glucosamine 1-phosphate: step 1/1. It functions in the pathway bacterial outer membrane biogenesis; LPS lipid A biosynthesis. Its function is as follows. Catalyzes the last two sequential reactions in the de novo biosynthetic pathway for UDP-N-acetylglucosamine (UDP-GlcNAc). The C-terminal domain catalyzes the transfer of acetyl group from acetyl coenzyme A to glucosamine-1-phosphate (GlcN-1-P) to produce N-acetylglucosamine-1-phosphate (GlcNAc-1-P), which is converted into UDP-GlcNAc by the transfer of uridine 5-monophosphate (from uridine 5-triphosphate), a reaction catalyzed by the N-terminal domain. This Clostridium novyi (strain NT) protein is Bifunctional protein GlmU.